Consider the following 163-residue polypeptide: Large ribosomal subunit protein uL11 (163 aa).

Belongs to the universal ribosomal protein uL11 family. As to quaternary structure, part of the ribosomal stalk of the 50S ribosomal subunit. Interacts with L10 and the large rRNA to form the base of the stalk. L10 forms an elongated spine to which L12 dimers bind in a sequential fashion forming a multimeric L10(L12)X complex.

Its function is as follows. Forms part of the ribosomal stalk which helps the ribosome interact with GTP-bound translation factors. The chain is Large ribosomal subunit protein uL11 from Thermococcus onnurineus (strain NA1).